Here is a 577-residue protein sequence, read N- to C-terminus: MSTATIQDEDIKFQRENWEMIRSHVSPIISNLTMDNLQESHRDLFQVNILIGRNIICKNVVDFTLNKQNGRLIPALSALIALLNSDIPDIGETLAKELMLMFVQQFNRKDYVSCGNILQCLSILFLYDVIHEIVILQILLLLLEKNSLRLVIAVMKICGWKLALVSKKTHDMIWEKLRYILQTQELSSTLRESLETLFEIRQKDYKSGSQGLFILDPTSYTVHTHSYIVSDEDEANKELGNFEKCENFNELTMAFDTLRQKLLINNTSDTNEGSNSQLQIYDMTSTNDVEFKKKIYLVLKSSLSGDEAAHKLLKLKIANNLKKSVVDIIIKSSLQESTFSKFYSILSERMITFHRSWQTAYNETFEQNYTQDIEDYETDQLRILGKFWGHLISYEFLPMDCLKIIKLTEEESCPQGRIFIKFLFQELVNELGLDELQLRLNSSKLDGMFPLEGDAEHIRYSINFFTAIGLGLLTEDMRSRLTIIQEVEDAEEEEKKLREEEELEKLRKKARESQPTQGPKIHESRLFLQKDTRENSRSRSPFTVETRKRARSRTPPRGSRNHRNRSRTPPARRQRHR.

Positions 22 to 204 constitute an MIF4G domain; the sequence is RSHVSPIISN…ETLFEIRQKD (183 aa). The MI domain maps to 290–407; sequence EFKKKIYLVL…PMDCLKIIKL (118 aa). A disordered region spans residues 505 to 577; it reads KLRKKARESQ…TPPARRQRHR (73 aa). Over residues 520–537 the composition is skewed to basic and acidic residues; sequence KIHESRLFLQKDTRENSR. Positions 548 to 577 are enriched in basic residues; sequence KRARSRTPPRGSRNHRNRSRTPPARRQRHR.

This sequence belongs to the CWC22 family. Belongs to the CWC complex (or CEF1-associated complex), a spliceosome subcomplex composed of the U2, U5 and U6 snRNAs and at least BUD13, BUD31, BRR2, CDC40, CEF1, CLF1, CUS1, CWC2, CWC15, CWC21, CWC22, CWC23, CWC24, CWC25, CWC27, ECM2, HSH155, IST3, ISY1, LEA1, MSL1, NTC20, PRP8, PRP9, PRP11, PRP19, PRP21, PRP22, PRP45, PRP46, SLU7, SMB1, SMD1, SMD2, SMD3, SMX2, SMX3, SNT309, SNU114, SPP2, SYF1, SYF2, RSE1 and YJU2.

It is found in the cytoplasm. The protein resides in the nucleus. Functionally, may be involved in pre-mRNA splicing. The polypeptide is Pre-mRNA-splicing factor CWC22 (CWC22) (Saccharomyces cerevisiae (strain ATCC 204508 / S288c) (Baker's yeast)).